The primary structure comprises 482 residues: Cysteine--tRNA ligase (482 aa).

A Zn(2+)-binding site is contributed by Cys29. A 'HIGH' region motif is present at residues 31-41 (VTVYDYCHLGH). The Zn(2+) site is built by Cys213, His238, and Glu242. Positions 275 to 279 (KMSKS) match the 'KMSKS' region motif. Lys278 provides a ligand contact to ATP.

This sequence belongs to the class-I aminoacyl-tRNA synthetase family. As to quaternary structure, monomer. It depends on Zn(2+) as a cofactor.

It localises to the cytoplasm. It carries out the reaction tRNA(Cys) + L-cysteine + ATP = L-cysteinyl-tRNA(Cys) + AMP + diphosphate. This chain is Cysteine--tRNA ligase, found in Gloeobacter violaceus (strain ATCC 29082 / PCC 7421).